The chain runs to 416 residues: Serine hydroxymethyltransferase (416 aa).

(6S)-5,6,7,8-tetrahydrofolate contacts are provided by residues Leu-118 and 122–124 (GHL). Lys-226 bears the N6-(pyridoxal phosphate)lysine mark. Residue 350–352 (SPF) participates in (6S)-5,6,7,8-tetrahydrofolate binding.

Belongs to the SHMT family. Homodimer. Pyridoxal 5'-phosphate serves as cofactor.

Its subcellular location is the cytoplasm. The catalysed reaction is (6R)-5,10-methylene-5,6,7,8-tetrahydrofolate + glycine + H2O = (6S)-5,6,7,8-tetrahydrofolate + L-serine. Its pathway is one-carbon metabolism; tetrahydrofolate interconversion. It participates in amino-acid biosynthesis; glycine biosynthesis; glycine from L-serine: step 1/1. Its function is as follows. Catalyzes the reversible interconversion of serine and glycine with tetrahydrofolate (THF) serving as the one-carbon carrier. This reaction serves as the major source of one-carbon groups required for the biosynthesis of purines, thymidylate, methionine, and other important biomolecules. Also exhibits THF-independent aldolase activity toward beta-hydroxyamino acids, producing glycine and aldehydes, via a retro-aldol mechanism. In Sulfurovum sp. (strain NBC37-1), this protein is Serine hydroxymethyltransferase.